A 541-amino-acid chain; its full sequence is MAGAIIENMSTKKLCMVGVALLLLQVLAFLVGGLIAPKPTSYVNPVAMKCVDVRKNHRSSKWLMPWGTEPCKSIQSFDEAANRMIEANDIVFAAHIPNSQFEMSPWFQFMLVVLQLDIAFKLNNYIEENSMVTLDVSVAYRDDLKEEWKELASSVEQRKLNCILPVEKTLANEGRHYDCDVIPLMELGSVSHKYYLFNIRLPVNERKKANIGIGEIRDLHVVSIFQNGGFTMVWFAMKTFLTPSIIIIMIWYWRRITMMTRSPVLLEKVIFALGFSMTFINIPVEWFSIGYDWTWMLLFGDIRQGIFYAMLLSFWIIFCGEHMMDQTERNRISVYWKQVGPIAFGSCCLFIFDMCERGVQLKNPFYSIWTTDVGAEIAMAFIIVAGICACLYFLFLCFMVYQVFRNISGKQSNLPAMTKARRLHYEGLIFRFKFLMIITLACAALTIVFFITTQITEGNWKLGDLSIELNSAFFTGVYGMWNLYVFALMFLYAPSHKHYGDGQSNDGAGMSSGEELQLTTTITHIDGPTEVYRLAGKEAQE.

The first 28 residues, 1–28 (MAGAIIENMSTKKLCMVGVALLLLQVLA), serve as a signal peptide directing secretion. At 29 to 232 (FLVGGLIAPK…SIFQNGGFTM (204 aa)) the chain is on the lumenal side. Residues 233 to 253 (VWFAMKTFLTPSIIIIMIWYW) form a helical membrane-spanning segment. Residues 254–268 (RRITMMTRSPVLLEK) lie on the Cytoplasmic side of the membrane. A helical transmembrane segment spans residues 269–289 (VIFALGFSMTFINIPVEWFSI). The Lumenal portion of the chain corresponds to 290–303 (GYDWTWMLLFGDIR). Residues 304 to 324 (QGIFYAMLLSFWIIFCGEHMM) form a helical membrane-spanning segment. The Cytoplasmic portion of the chain corresponds to 325 to 331 (DQTERNR). A helical transmembrane segment spans residues 332 to 352 (ISVYWKQVGPIAFGSCCLFIF). The Lumenal portion of the chain corresponds to 353–379 (DMCERGVQLKNPFYSIWTTDVGAEIAM). Residues 380 to 400 (AFIIVAGICACLYFLFLCFMV) traverse the membrane as a helical segment. Residues 401-431 (YQVFRNISGKQSNLPAMTKARRLHYEGLIFR) lie on the Cytoplasmic side of the membrane. Residues 432-452 (FKFLMIITLACAALTIVFFIT) form a helical membrane-spanning segment. At 453–471 (TQITEGNWKLGDLSIELNS) the chain is on the lumenal side. A helical transmembrane segment spans residues 472–492 (AFFTGVYGMWNLYVFALMFLY). Residues 493–541 (APSHKHYGDGQSNDGAGMSSGEELQLTTTITHIDGPTEVYRLAGKEAQE) are Cytoplasmic-facing.

This sequence belongs to the wntless family.

Its subcellular location is the golgi apparatus membrane. The protein resides in the cytoplasmic vesicle membrane. In terms of biological role, required for a subset of Wnt-dependent developmental processes, in particular, eye and pronephros development. Regulates the secretion of wnt4, which is required for eye development. This chain is Protein wntless homolog A (wls-a), found in Xenopus laevis (African clawed frog).